Here is a 450-residue protein sequence, read N- to C-terminus: Phosphoglucosamine mutase (450 aa).

S101 (phosphoserine intermediate) is an active-site residue. 4 residues coordinate Mg(2+): S101, D242, D244, and D246. Position 101 is a phosphoserine (S101).

The protein belongs to the phosphohexose mutase family. Mg(2+) is required as a cofactor. Post-translationally, activated by phosphorylation.

The catalysed reaction is alpha-D-glucosamine 1-phosphate = D-glucosamine 6-phosphate. Functionally, catalyzes the conversion of glucosamine-6-phosphate to glucosamine-1-phosphate. The protein is Phosphoglucosamine mutase of Rhodopseudomonas palustris (strain TIE-1).